The following is a 474-amino-acid chain: Sensor protein CreC (474 aa).

Residues 1–6 (MRIGMR) are Periplasmic-facing. The helical transmembrane segment at 7 to 27 (LLLGYFLLVAVAAWFVLAIFV) threads the bilayer. Over 28 to 146 (KEVKPGVRRA…LQNPADPESS (119 aa)) the chain is Cytoplasmic. Residues 147–167 (VMYVAAPIMDGSRLIGVLSVG) form a helical membrane-spanning segment. The Periplasmic portion of the chain corresponds to 168–183 (KPNAAMAPVIKRSERR). Residues 184-204 (ILWASAILLGIALVIGAGMVW) form a helical membrane-spanning segment. One can recognise an HAMP domain in the interval 205–255 (WINRSIARLTRYADSVTDNKPVPLPDLGSSELRKLAQALESMRVKLEGKNY). At 205-474 (WINRSIARLT…ASLRLHRHFT (270 aa)) the chain is on the cytoplasmic side. A Histidine kinase domain is found at 262–473 (ALTHELKSPL…LASLRLHRHF (212 aa)). Histidine 265 bears the Phosphohistidine; by autocatalysis mark.

Autophosphorylated.

It is found in the cell inner membrane. It carries out the reaction ATP + protein L-histidine = ADP + protein N-phospho-L-histidine.. Functionally, member of the two-component regulatory system CreC/CreB involved in catabolic regulation. CreC may function as a membrane-associated protein kinase that phosphorylates CreB in response to environmental signals. CreC can also phosphorylate PhoB. In Escherichia coli (strain K12), this protein is Sensor protein CreC (creC).